Consider the following 494-residue polypeptide: Probable malate:quinone oxidoreductase 3 (494 aa).

This sequence belongs to the MQO family. Requires FAD as cofactor.

The enzyme catalyses (S)-malate + a quinone = a quinol + oxaloacetate. It participates in carbohydrate metabolism; tricarboxylic acid cycle; oxaloacetate from (S)-malate (quinone route): step 1/1. In Staphylococcus epidermidis (strain ATCC 12228 / FDA PCI 1200), this protein is Probable malate:quinone oxidoreductase 3.